The primary structure comprises 160 residues: Protein CrtK (160 aa).

Helical transmembrane passes span 3–23 (LTLF…GAIF), 37–57 (WVPP…LMSI), 76–96 (LAFW…FFGL), 101–121 (GGML…VLFW), and 129–149 (LMFV…FSVW).

The protein belongs to the TspO/BZRP family.

The protein resides in the cell inner membrane. It functions in the pathway carotenoid biosynthesis; spheroidene biosynthesis. The protein is Protein CrtK (crtK) of Rhodobacter capsulatus (strain ATCC BAA-309 / NBRC 16581 / SB1003).